A 386-amino-acid chain; its full sequence is MAREFLFTSESVTEGHPDKMADQISDAILDYIIERDPNARVACETLLSNGFAIIAGELKTTTYAPMQDIVREVIREIGYTDALYGFDYRSAGVLNGVGEQSPDINQGVDQAGGEIGAGDQGLMFGYACKETDVLMPLPITMAHRLTQELANARKEGVLPFLRPDGKAQVTVQYVDGKPKKIKTIVISTQHDPDVSYNRLKDAVIEEIVYKVIPKELIADDIVYHINPTGRFVIGGPQGDAGLTGRKIIVDTYGGSCPHGGGAFSGKDPTKVDRSGAYAARYVAKNLVASGACEKATVQIAYAIGVVEPVSIMVDSHGTAKVPDEKLEACVRDLFDLTPRGIIKTLDLLRPIYRKTAAYGHFGRELPEFTWEKTDKADEISDYLKIR.

Residue histidine 16 participates in ATP binding. Residue aspartate 18 participates in Mg(2+) binding. Residue glutamate 44 coordinates K(+). Residues glutamate 57 and glutamine 100 each contribute to the L-methionine site. The flexible loop stretch occupies residues 100–110 (QSPDINQGVDQ). Residues 164 to 166 (DGK), 230 to 231 (RF), aspartate 239, 245 to 246 (RK), alanine 262, and lysine 266 each bind ATP. Aspartate 239 contacts L-methionine. Residue lysine 270 coordinates L-methionine.

Belongs to the AdoMet synthase family. Homotetramer; dimer of dimers. It depends on Mg(2+) as a cofactor. Requires K(+) as cofactor.

It is found in the cytoplasm. The enzyme catalyses L-methionine + ATP + H2O = S-adenosyl-L-methionine + phosphate + diphosphate. It functions in the pathway amino-acid biosynthesis; S-adenosyl-L-methionine biosynthesis; S-adenosyl-L-methionine from L-methionine: step 1/1. Catalyzes the formation of S-adenosylmethionine (AdoMet) from methionine and ATP. The overall synthetic reaction is composed of two sequential steps, AdoMet formation and the subsequent tripolyphosphate hydrolysis which occurs prior to release of AdoMet from the enzyme. In Nitratiruptor sp. (strain SB155-2), this protein is S-adenosylmethionine synthase.